The sequence spans 162 residues: Succinate dehydrogenase assembly factor 2, mitochondrial (162 aa).

The transit peptide at 1-35 (MHNMFPALTKTLSLQGYKIINSQTGSAAWSCGRRW) directs the protein to the mitochondrion.

This sequence belongs to the SDHAF2 family. Interacts with SDH1 within the SDH catalytic dimer.

The protein localises to the mitochondrion matrix. Plays an essential role in the assembly of succinate dehydrogenase (SDH), an enzyme complex (also referred to as respiratory complex II) that is a component of both the tricarboxylic acid (TCA) cycle and the mitochondrial electron transport chain, and which couples the oxidation of succinate to fumarate with the reduction of ubiquinone (coenzyme Q) to ubiquinol. Required for flavinylation (covalent attachment of FAD) of the flavoprotein subunit SDH1 of the SDH catalytic dimer. It is unclear whether it participates in the chemistry of FAD attachment (enzymatic function) or acts as a chaperone that maintains SDH1 in a conformation that is susceptible to autocatalytic FAD attachment. Does not bind FAD or FADH(2) in vitro. Involved in sporulation. Required for the full activation of the early meiotic inducer IME1. The protein is Succinate dehydrogenase assembly factor 2, mitochondrial of Saccharomyces cerevisiae (strain ATCC 204508 / S288c) (Baker's yeast).